The chain runs to 321 residues: Phospho-N-acetylmuramoyl-pentapeptide-transferase (321 aa).

10 helical membrane passes run 1 to 21, 50 to 70, 76 to 96, 112 to 132, 140 to 160, 173 to 193, 198 to 218, 225 to 245, 250 to 270, and 300 to 320; these read MVYL…PVLI, MGGL…IIFI, IILL…DDYI, FLAQ…FNLT, IPFI…IVFW, GLDG…AIMA, ATSI…FLPF, VFMG…ISIM, LSLL…MIQV, and VVTV…WIGV.

It belongs to the glycosyltransferase 4 family. MraY subfamily. It depends on Mg(2+) as a cofactor.

It localises to the cell membrane. It catalyses the reaction UDP-N-acetyl-alpha-D-muramoyl-L-alanyl-gamma-D-glutamyl-L-lysyl-D-alanyl-D-alanine + di-trans,octa-cis-undecaprenyl phosphate = Mur2Ac(oyl-L-Ala-gamma-D-Glu-L-Lys-D-Ala-D-Ala)-di-trans,octa-cis-undecaprenyl diphosphate + UMP. It functions in the pathway cell wall biogenesis; peptidoglycan biosynthesis. Catalyzes the initial step of the lipid cycle reactions in the biosynthesis of the cell wall peptidoglycan: transfers peptidoglycan precursor phospho-MurNAc-pentapeptide from UDP-MurNAc-pentapeptide onto the lipid carrier undecaprenyl phosphate, yielding undecaprenyl-pyrophosphoryl-MurNAc-pentapeptide, known as lipid I. The sequence is that of Phospho-N-acetylmuramoyl-pentapeptide-transferase from Staphylococcus saprophyticus subsp. saprophyticus (strain ATCC 15305 / DSM 20229 / NCIMB 8711 / NCTC 7292 / S-41).